The sequence spans 352 residues: Transcription factor BHLH156 (352 aa).

Residues 59 to 141 (GGDDDDNGGV…RSKTIVSERK (83 aa)) form a disordered region. Residues 130-143 (RDRSKTIVSERKRR) form a basic motif region. The bHLH domain occupies 130–179 (RDRSKTIVSERKRRVRMKEKLYELRALVPNITKMDKASIIADAVVYVKDL). The helix-loop-helix motif stretch occupies residues 144 to 179 (VRMKEKLYELRALVPNITKMDKASIIADAVVYVKDL). Residues 194–216 (EEARPIRPPPPSAAAQRPQRQPR) are disordered. Residues 206–216 (AAAQRPQRQPR) show a composition bias toward low complexity.

Belongs to the bHLH protein family. Forms homodimers. Interacts with IRO2 in the nucleus. As to expression, expressed in the meristematic zone of lateral and primary roots.

It is found in the nucleus. In terms of biological role, transcription factor involved in positive regulation of genes involved in strategy II iron acquisition, including genes for mugineic acid (MA) family phytosiderophores biosynthesis, and genes involved in S-adenosylmethionine cycle and iron transport. May play a role in the regulation of iron deficiency response by promoting the nuclear localization of IRO2. Possesses transactivation activity in yeast. This Oryza sativa subsp. japonica (Rice) protein is Transcription factor BHLH156.